A 610-amino-acid polypeptide reads, in one-letter code: MLKCIKHEYGIKNMKSIRNFSIIAHIDHGKSTLSDRLIQLCGGLSEREMSNQVLDSMDLEKERGITIKAQSVMIDYKNKSGNIFNLNFIDTPGHVDFSYEVSRSLAACEGALLVVDSTQGVEAQTLANCYTAIDMNVEIVPVLNKIDLPNSNADKVAKEIEDIIGIPALDAIRCSAKTGEGIEDLIERIINDIPYPKGSINSPLQALIIDSWFDNYLGVVSLIRIKNGILFEKDKIQVMSTGKNYYVDQIGVFTPKKLNKNQLRCGEVGWIICGIKNIIAAPVGDTLTTAKNPAKNMIIGFKKIKPQIYAGLFPLTSDQYEMFRDALGKLSLNDASLFYEPENSVALGFGFRCGFLGVLHMEIIQARLEREYSIDLITTIPTVIYEIELINGKIIYLDTPSNFPNMNDIKIIKEPIVECSILSPPQFLGSIIKLCIKKRGVQINMVYHSHQVLLKYNIPMNEVILNFFDELKSVSSGYASLEYDFKYFQSVKMVRIDILINSEKVDALTILSYHKNAQSRSREIVDKMKKLIPRHQFDISIQAVINNSVIARSTIKQLRKNVLSKCYGGDVSRKKKLLQKQKDGKKRMKKIGNVNVPKTVFLSILNSRES.

The 183-residue stretch at 15–197 folds into the tr-type G domain; sequence KSIRNFSIIA…RIINDIPYPK (183 aa). GTP is bound by residues 27-32 and 144-147; these read DHGKST and NKID.

Belongs to the TRAFAC class translation factor GTPase superfamily. Classic translation factor GTPase family. LepA subfamily.

The protein resides in the cell membrane. It carries out the reaction GTP + H2O = GDP + phosphate + H(+). Its function is as follows. Required for accurate and efficient protein synthesis under certain stress conditions. May act as a fidelity factor of the translation reaction, by catalyzing a one-codon backward translocation of tRNAs on improperly translocated ribosomes. Back-translocation proceeds from a post-translocation (POST) complex to a pre-translocation (PRE) complex, thus giving elongation factor G a second chance to translocate the tRNAs correctly. Binds to ribosomes in a GTP-dependent manner. This chain is Elongation factor 4, found in Buchnera aphidicola subsp. Acyrthosiphon pisum (strain 5A).